Here is an 86-residue protein sequence, read N- to C-terminus: U-actitoxin-Avd10a (86 aa).

The signal sequence occupies residues 1–20 (MSRIAILLFVAFLLVAGISA). Positions 21 to 42 (KSTAHFKKNVLADLFKERRFNA) are excised as a propeptide. The 36-residue stretch at 51 to 86 (CVNIDVDSFCDGMAERGACNIIPQMATNCAKACNSC) folds into the ShKT domain. Disulfide bonds link cysteine 51-cysteine 86, cysteine 60-cysteine 79, and cysteine 69-cysteine 83.

This sequence belongs to the sea anemone type 1 potassium channel toxin family. Type 1b subfamily.

The protein resides in the secreted. Its subcellular location is the nematocyst. Inhibits voltage-gated potassium channels (Kv1/KCNA). The chain is U-actitoxin-Avd10a from Anemonia viridis (Snakelocks anemone).